A 739-amino-acid chain; its full sequence is Phosphoribosylformylglycinamidine synthase subunit PurL (739 aa).

The active site involves H53. ATP contacts are provided by Y56 and K95. E97 lines the Mg(2+) pocket. Substrate is bound by residues 98 to 101 (SHNH) and R120. H99 (proton acceptor) is an active-site residue. D121 serves as a coordination point for Mg(2+). Q244 lines the substrate pocket. D274 contacts Mg(2+). 318 to 320 (ESQ) lines the substrate pocket. ATP is bound by residues D501 and G538. Residue N539 coordinates Mg(2+). S541 serves as a coordination point for substrate.

It belongs to the FGAMS family. As to quaternary structure, monomer. Part of the FGAM synthase complex composed of 1 PurL, 1 PurQ and 2 PurS subunits.

Its subcellular location is the cytoplasm. The enzyme catalyses N(2)-formyl-N(1)-(5-phospho-beta-D-ribosyl)glycinamide + L-glutamine + ATP + H2O = 2-formamido-N(1)-(5-O-phospho-beta-D-ribosyl)acetamidine + L-glutamate + ADP + phosphate + H(+). The protein operates within purine metabolism; IMP biosynthesis via de novo pathway; 5-amino-1-(5-phospho-D-ribosyl)imidazole from N(2)-formyl-N(1)-(5-phospho-D-ribosyl)glycinamide: step 1/2. Part of the phosphoribosylformylglycinamidine synthase complex involved in the purines biosynthetic pathway. Catalyzes the ATP-dependent conversion of formylglycinamide ribonucleotide (FGAR) and glutamine to yield formylglycinamidine ribonucleotide (FGAM) and glutamate. The FGAM synthase complex is composed of three subunits. PurQ produces an ammonia molecule by converting glutamine to glutamate. PurL transfers the ammonia molecule to FGAR to form FGAM in an ATP-dependent manner. PurS interacts with PurQ and PurL and is thought to assist in the transfer of the ammonia molecule from PurQ to PurL. This Listeria monocytogenes serovar 1/2a (strain ATCC BAA-679 / EGD-e) protein is Phosphoribosylformylglycinamidine synthase subunit PurL.